Consider the following 367-residue polypeptide: Tetraprenyl-beta-curcumene synthase (367 aa).

The protein belongs to the large terpene synthase family.

The catalysed reaction is all-trans-heptaprenyl diphosphate = (R)-tetraprenyl-beta-curcumene + diphosphate. Catalyzes the transformation of a linear C35 prenyl diphosphate chain to form tetraprenyl-beta-curcumene. The polypeptide is Tetraprenyl-beta-curcumene synthase (ytpB) (Bacillus subtilis (strain 168)).